The sequence spans 369 residues: Nuclear hormone receptor family member nhr-64 (369 aa).

Positions 67–142 (EKCQVDKAKR…ASTRGLRTTV (76 aa)) form a DNA-binding region, nuclear receptor. 2 consecutive NR C4-type zinc fingers follow at residues 70-90 (QVDK…CLRK) and 106-130 (PANP…TLIR). Residues 120–352 (PDDPLLDTLI…NLMLELMLPN (233 aa)) enclose the NR LBD domain.

The protein belongs to the nuclear hormone receptor family.

The protein localises to the nucleus. Functionally, orphan nuclear receptor. In Caenorhabditis elegans, this protein is Nuclear hormone receptor family member nhr-64 (nhr-64).